Here is a 171-residue protein sequence, read N- to C-terminus: MFDGIGFMELLLIGVLGLVVLGPERLPVAVRSITSWIRAMKRMANSVKEELEQELKIEQLHADLKKAESKGLSNLSPELKESIEQLKQAAQSVNRPYQVQDPVKDTPAPENQIHSPVSSTVQTSQVHTSPAQASQANPTATVEASPTSASPATPSEPSQGADTRSNPKANG.

A helical transmembrane segment spans residues 2-22; that stretch reads FDGIGFMELLLIGVLGLVVLG. The interval 69-171 is disordered; it reads SKGLSNLSPE…DTRSNPKANG (103 aa). The segment covering 88–97 has biased composition (polar residues); that stretch reads QAAQSVNRPY. Composition is skewed to low complexity over residues 114–130 and 138–158; these read HSPVSSTVQTSQVHTSP and PTATVEASPTSASPATPSEPS. Over residues 160 to 171 the composition is skewed to polar residues; that stretch reads GADTRSNPKANG.

Belongs to the TatB family. The Tat system comprises two distinct complexes: a TatABC complex, containing multiple copies of TatA, TatB and TatC subunits, and a separate TatA complex, containing only TatA subunits. Substrates initially bind to the TatABC complex, which probably triggers association of the separate TatA complex to form the active translocon.

It localises to the cell inner membrane. Functionally, part of the twin-arginine translocation (Tat) system that transports large folded proteins containing a characteristic twin-arginine motif in their signal peptide across membranes. Together with TatC, TatB is part of a receptor directly interacting with Tat signal peptides. TatB may form an oligomeric binding site that transiently accommodates folded Tat precursor proteins before their translocation. The protein is Sec-independent protein translocase protein TatB of Shewanella baltica (strain OS185).